A 602-amino-acid polypeptide reads, in one-letter code: Elongation factor 4 (602 aa).

The tr-type G domain occupies 7–190; sequence KHIRNFCIVA…AVVQKVPAPS (184 aa). Residues 19 to 24 and 137 to 140 each bind GTP; these read DHGKST and NKID.

This sequence belongs to the TRAFAC class translation factor GTPase superfamily. Classic translation factor GTPase family. LepA subfamily.

The protein localises to the cell membrane. The enzyme catalyses GTP + H2O = GDP + phosphate + H(+). Functionally, required for accurate and efficient protein synthesis under certain stress conditions. May act as a fidelity factor of the translation reaction, by catalyzing a one-codon backward translocation of tRNAs on improperly translocated ribosomes. Back-translocation proceeds from a post-translocation (POST) complex to a pre-translocation (PRE) complex, thus giving elongation factor G a second chance to translocate the tRNAs correctly. Binds to ribosomes in a GTP-dependent manner. In Clostridium acetobutylicum (strain ATCC 824 / DSM 792 / JCM 1419 / IAM 19013 / LMG 5710 / NBRC 13948 / NRRL B-527 / VKM B-1787 / 2291 / W), this protein is Elongation factor 4.